We begin with the raw amino-acid sequence, 265 residues long: F-box only protein 6 (265 aa).

The region spanning 3-50 (LVSINQLPENILLEVFMHVPARQLLRNCRPVCCLWRDLIDLVSLWKRK) is the F-box domain. The FBA domain maps to 71 to 252 (FYFLCSLRRN…VTNSSVVISH (182 aa)). Ser251 is modified (phosphoserine).

As to quaternary structure, part of a SCF (SKP1-cullin-F-box) protein ligase complex. Interacts with VCP, CHEK1 and CUL1.

It is found in the cytoplasm. It functions in the pathway protein modification; protein ubiquitination. Functionally, substrate-recognition component of some SCF (SKP1-CUL1-F-box protein)-type E3 ubiquitin ligase complexes. Involved in endoplasmic reticulum-associated degradation pathway (ERAD) for misfolded lumenal proteins by recognizing and binding sugar chains on unfolded glycoproteins that are retrotranslocated into the cytosol and promoting their ubiquitination and subsequent degradation. Able to recognize and bind denatured glycoproteins, which are modified with not only high-mannose but also complex-type oligosaccharides. Also recognizes sulfated glycans. Also involved in DNA damage response by specifically recognizing activated CHEK1 (phosphorylated on 'Ser-345'), promoting its ubiquitination and degradation. Ubiquitination of CHEK1 is required to ensure that activated CHEK1 does not accumulate as cells progress through S phase, or when replication forks encounter transient impediments during normal DNA replication. The chain is F-box only protein 6 (FBXO6) from Bos taurus (Bovine).